Reading from the N-terminus, the 430-residue chain is Tol-Pal system protein TolB (430 aa).

An N-terminal signal peptide occupies residues Met-1–Ala-21.

Belongs to the TolB family. The Tol-Pal system is composed of five core proteins: the inner membrane proteins TolA, TolQ and TolR, the periplasmic protein TolB and the outer membrane protein Pal. They form a network linking the inner and outer membranes and the peptidoglycan layer.

Its subcellular location is the periplasm. Functionally, part of the Tol-Pal system, which plays a role in outer membrane invagination during cell division and is important for maintaining outer membrane integrity. TolB occupies a key intermediary position in the Tol-Pal system because it communicates directly with both membrane-embedded components, Pal in the outer membrane and TolA in the inner membrane. The protein is Tol-Pal system protein TolB of Serratia proteamaculans (strain 568).